The chain runs to 111 residues: Inner membrane protein YdgC (111 aa).

At 1 to 26 (MGLVIKAALGALVVLLIGVLAKTKNY) the chain is on the cytoplasmic side. Residues 27 to 47 (YIAGLIPLFPTFALIAHYIVA) form a helical membrane-spanning segment. The Periplasmic portion of the chain corresponds to 48–58 (SERGIEALRAT). Residues 59-79 (IIFSMWSIIPYFVYLVSLWYF) traverse the membrane as a helical segment. The Cytoplasmic portion of the chain corresponds to 80–87 (TGMMRLPA). A helical membrane pass occupies residues 88–108 (AFVGSVACWGISAWVLIICWI). The Periplasmic segment spans residues 109-111 (KLH).

It to P.aeruginosa GlpM.

It localises to the cell inner membrane. In Escherichia coli O157:H7, this protein is Inner membrane protein YdgC (ydgC).